A 139-amino-acid chain; its full sequence is Prostate-associated microseminoprotein (139 aa).

An N-terminal signal peptide occupies residues 1–35; the sequence is MALRMLWAGQAKGILGGWRTICLVVSLFLQHPGVS. 5 disulfide bridges follow: C38-C78, C46-C69, C64-C100, C67-C77, and C91-C114. Positions 116–139 are disordered; that stretch reads GGGPDLEWGSANTPAPGASAPHSS.

Belongs to the beta-microseminoprotein family.

The protein resides in the secreted. Its function is as follows. Acts as a ligand for C-C chemokine receptor CCR2. Signals through binding and activation of CCR2 and induces a strong chemotactic response and mobilization of intracellular calcium ions. Exhibits a chemotactic activity for monocytes and lymphocytes but not neutrophils. The polypeptide is Prostate-associated microseminoprotein (Msmp) (Mus musculus (Mouse)).